The primary structure comprises 242 residues: Probable septum site-determining protein MinC (242 aa).

It belongs to the MinC family. In terms of assembly, interacts with MinD and FtsZ.

Cell division inhibitor that blocks the formation of polar Z ring septums. Rapidly oscillates between the poles of the cell to destabilize FtsZ filaments that have formed before they mature into polar Z rings. Prevents FtsZ polymerization. The polypeptide is Probable septum site-determining protein MinC (Buchnera aphidicola subsp. Schizaphis graminum (strain Sg)).